Consider the following 315-residue polypeptide: Tryptophan prenyltransferase ComQ (315 aa).

Mg(2+) contacts are provided by aspartate 95 and aspartate 99.

This sequence belongs to the FPP/GGPP synthase family. The cofactor is Mg(2+).

Its subcellular location is the cell membrane. It carries out the reaction L-tryptophyl-[protein] + (2E,6E)-farnesyl diphosphate = (2S,3R)-3-farnesyl-2,3-dihydro-2,N(alpha)-cyclo-L-tryptophyl-[protein] + diphosphate. Its function is as follows. Part of a major quorum-sensing system that regulates the development of genetic competence. Involved in the maturation of the competence pheromone ComX. Acts by catalyzing the transfer of a farnesyl group on the ComX pheromone. In vitro, can also catalyze the farnesylation of single tryptophan and tryptophan derivatives. This Bacillus subtilis subsp. natto (strain BEST195) protein is Tryptophan prenyltransferase ComQ.